Here is an 83-residue protein sequence, read N- to C-terminus: MKATYNIQDYFLNQLRKDSVPTTVFLISGYQLRGLIKSFDNFTVILESEGKQQLIYKHAISTFAPARNVTLYEQETETEEVTR.

Residues 9–69 form the Sm domain; it reads DYFLNQLRKD…ISTFAPARNV (61 aa).

This sequence belongs to the Hfq family. In terms of assembly, homohexamer.

RNA chaperone that binds small regulatory RNA (sRNAs) and mRNAs to facilitate mRNA translational regulation in response to envelope stress, environmental stress and changes in metabolite concentrations. Also binds with high specificity to tRNAs. This is RNA-binding protein Hfq from Exiguobacterium sibiricum (strain DSM 17290 / CCUG 55495 / CIP 109462 / JCM 13490 / 255-15).